Consider the following 524-residue polypeptide: Bifunctional purine biosynthesis protein PurH (524 aa).

Residues 1–145 (MIKQALLSVS…KNHRDVTVIV (145 aa)) form the MGS-like domain.

The protein belongs to the PurH family.

It carries out the reaction (6R)-10-formyltetrahydrofolate + 5-amino-1-(5-phospho-beta-D-ribosyl)imidazole-4-carboxamide = 5-formamido-1-(5-phospho-D-ribosyl)imidazole-4-carboxamide + (6S)-5,6,7,8-tetrahydrofolate. It catalyses the reaction IMP + H2O = 5-formamido-1-(5-phospho-D-ribosyl)imidazole-4-carboxamide. Its pathway is purine metabolism; IMP biosynthesis via de novo pathway; 5-formamido-1-(5-phospho-D-ribosyl)imidazole-4-carboxamide from 5-amino-1-(5-phospho-D-ribosyl)imidazole-4-carboxamide (10-formyl THF route): step 1/1. The protein operates within purine metabolism; IMP biosynthesis via de novo pathway; IMP from 5-formamido-1-(5-phospho-D-ribosyl)imidazole-4-carboxamide: step 1/1. The chain is Bifunctional purine biosynthesis protein PurH from Cupriavidus necator (strain ATCC 17699 / DSM 428 / KCTC 22496 / NCIMB 10442 / H16 / Stanier 337) (Ralstonia eutropha).